The following is a 1097-amino-acid chain: Apolipoprotein B receptor (1097 aa).

5 disordered regions span residues 64 to 249 (QEDL…KGEE), 262 to 376 (AWGT…WTTS), 410 to 739 (EEEG…SRRG), 789 to 866 (GWDS…ARAE), and 889 to 1097 (VGWQ…PKPQ). 3 stretches are compositionally biased toward basic and acidic residues: residues 83-92 (GPGDDRRHEV), 158-177 (ERQESHEQEVNREERLRSWE), and 185-208 (VRAREPGMARGAESEWTWHGETEG). The span at 209–218 (KAGAVGPKAA) shows a compositional bias: low complexity. Composition is skewed to basic and acidic residues over residues 219 to 232 (GDNREMEQGVREAD) and 279 to 302 (GREEARTTPGREEARAILDGEEAR). Low complexity predominate over residues 312 to 330 (TASGGEEAETASGGEEAGT). Over residues 331 to 362 (ASGGEEAGIASGGEAGTASGGEEAGTASGGEE) the composition is skewed to gly residues. The residue at position 458 (Ser-458) is a Phosphoserine. 2 stretches are compositionally biased toward basic and acidic residues: residues 463 to 487 (VDLRGKEAEMRQDLGIRADRARMEE) and 496 to 505 (EERGSSRDPV). The residue at position 510 (Ser-510) is a Phosphoserine. Thr-572 carries the post-translational modification Phosphothreonine. Phosphoserine is present on Ser-594. Basic and acidic residues-rich tracts occupy residues 594–606 (SKEEQERSLEAGP) and 626–637 (NRTRKDMERGNT). The segment covering 640–652 (DAADGEQREEEET) has biased composition (acidic residues). 3 stretches are compositionally biased toward basic and acidic residues: residues 791-800 (DSKEKEEAAA), 892-918 (QEREQREDSEGRCGDYHPEGEAPRLLD), and 928-950 (RRAEAKETEPESLEHVRGQEEQP). Positions 1000–1017 (SRVHLSRSSSQRRSRPSF) are enriched in basic residues. Over residues 1041–1050 (APEQRPLQLE) the composition is skewed to low complexity.

In terms of assembly, homodimer. In terms of processing, there are 2 forms in macrophages, the membrane-binding proteins 200 kDa (MBP 200) and 235 kDa (MBP 235), that can be reduced into a single active ligand-binding species with intermediate mobility (MBP 200R). In terms of tissue distribution, expressed in peripheral blood leukocytes &gt; bone marrow = spleen &gt; lymph node, and only faintly visible in appendix and thymus. Expressed in the brain, heart, kidney, liver, lung, pancreas, and placenta. Expressed primarily by reticuloendothelial cells: monocytes, macrophages, and endothelial cells. Expressed in atherosclerotic lesion foam cells.

Its subcellular location is the cell membrane. In terms of biological role, macrophage receptor that binds to the apolipoprotein B48 (APOB) of dietary triglyceride (TG)-rich lipoproteins (TRL) or to a like domain of APOB in hypertriglyceridemic very low density lipoprotein (HTG-VLDL). Binds and internalizes TRL when out of the context of the macrophage. May provide essential lipids to reticuloendothelial cells. Could also be involved in foam cell formation with elevated TRL and remnant lipoprotein (RLP). Mediates the rapid high-affinity uptake of chylomicrons (CM), HTG-VLDL, and trypsinized (tryp) VLDL devoid of APOE in vitro in macrophages. The chain is Apolipoprotein B receptor from Homo sapiens (Human).